A 289-amino-acid polypeptide reads, in one-letter code: Serine/threonine-protein phosphatase Pgam5, mitochondrial (289 aa).

A helical membrane pass occupies residues phenylalanine 7–leucine 23.

It belongs to the phosphoglycerate mutase family. BPG-dependent PGAM subfamily. In terms of assembly, interacts with Pk92B/ASK1.

It is found in the mitochondrion outer membrane. It carries out the reaction O-phospho-L-seryl-[protein] + H2O = L-seryl-[protein] + phosphate. It catalyses the reaction O-phospho-L-threonyl-[protein] + H2O = L-threonyl-[protein] + phosphate. Functionally, displays phosphatase activity for serine/threonine residues, and dephosphorylates and activates Pk92B kinase. Has apparently no phosphoglycerate mutase activity. The sequence is that of Serine/threonine-protein phosphatase Pgam5, mitochondrial from Drosophila simulans (Fruit fly).